The following is a 248-amino-acid chain: Triosephosphate isomerase (248 aa).

Lys-12 lines the substrate pocket. Residue His-94 is the Electrophile of the active site. Catalysis depends on Glu-165, which acts as the Proton acceptor.

It belongs to the triosephosphate isomerase family. In terms of assembly, homodimer.

The enzyme catalyses D-glyceraldehyde 3-phosphate = dihydroxyacetone phosphate. It participates in carbohydrate biosynthesis; gluconeogenesis. The protein operates within carbohydrate degradation; glycolysis; D-glyceraldehyde 3-phosphate from glycerone phosphate: step 1/1. The protein is Triosephosphate isomerase (Tpi) of Bombyx mori (Silk moth).